A 310-amino-acid polypeptide reads, in one-letter code: MATVQLSTQFSCQTRVSISPNSKSISKPPFLVPVTSIIHRPMISTGGIAVSPRRVFKVRATDTGEIGSALLAAEEAIEDVEETERLKRSLVDSLYGTDRGLSASSETRAEIGDLITQLESKNPTPAPTEALFLLNGKWILAYTSFVNLFPLLSRGIVPLIKVDEISQTIDSDNFTVQNSVRFAGPLGTNSISTNAKFEIRSPKRVQIKFEQGVIGTPQLTDSIEIPEYVEVLGQKIDLNPIRGLLTSVQDTASSVARTISSQPPLKFSLPADNAQSWLLTTYLDKDIRISRGDGGSVFVLIKEGSPLLNP.

The N-terminal 59 residues, 1–59 (MATVQLSTQFSCQTRVSISPNSKSISKPPFLVPVTSIIHRPMISTGGIAVSPRRVFKVR), are a transit peptide targeting the chloroplast. Phosphothreonine is present on threonine 61. Residues 65–94 (EIGSALLAAEEAIEDVEETERLKRSLVDSL) are a coiled coil.

This sequence belongs to the PAP/fibrillin family.

It localises to the plastid. The protein localises to the chloroplast. It is found in the plastoglobule. In terms of biological role, probably involved in light/cold stress-related jasmonate (JA) biosynthesis. In Arabidopsis thaliana (Mouse-ear cress), this protein is Probable plastid-lipid-associated protein 2, chloroplastic (PAP2).